The following is a 591-amino-acid chain: NADH-quinone oxidoreductase subunit C/D (591 aa).

Residues Met1 to Gln182 are NADH dehydrogenase I subunit C. The NADH dehydrogenase I subunit D stretch occupies residues Asp206–Arg591.

It in the N-terminal section; belongs to the complex I 30 kDa subunit family. In the C-terminal section; belongs to the complex I 49 kDa subunit family. NDH-1 is composed of 13 different subunits. Subunits NuoB, CD, E, F, and G constitute the peripheral sector of the complex.

It is found in the cell inner membrane. The catalysed reaction is a quinone + NADH + 5 H(+)(in) = a quinol + NAD(+) + 4 H(+)(out). NDH-1 shuttles electrons from NADH, via FMN and iron-sulfur (Fe-S) centers, to quinones in the respiratory chain. The immediate electron acceptor for the enzyme in this species is believed to be ubiquinone. Couples the redox reaction to proton translocation (for every two electrons transferred, four hydrogen ions are translocated across the cytoplasmic membrane), and thus conserves the redox energy in a proton gradient. The polypeptide is NADH-quinone oxidoreductase subunit C/D (Psychrobacter cryohalolentis (strain ATCC BAA-1226 / DSM 17306 / VKM B-2378 / K5)).